The chain runs to 222 residues: Dihydrophenazinedicarboxylate synthase (222 aa).

Residue Ser18 coordinates substrate. Residues 73–76 (RIVV) and 88–89 (ST) contribute to the FMN site. Position 90 (His90) interacts with substrate. FMN-binding positions include 94–95 (QK) and Gln117. Substrate is bound by residues Arg139 and Ser147. FMN is bound by residues 152–153 (QS) and Arg205.

This sequence belongs to the pyridoxamine 5'-phosphate oxidase family. FMN is required as a cofactor.

It catalyses the reaction (1R,6R)-1,4,5,5a,6,9-hexahydrophenazine-1,6-dicarboxylate + O2 = (1R,10aS)-1,4,10,10a-tetrahydrophenazine-1,6-dicarboxylate + H2O2. It carries out the reaction (1R,10aS)-1,4,10,10a-tetrahydrophenazine-1,6-dicarboxylate + O2 = (5aS)-5,5a-dihydrophenazine-1,6-dicarboxylate + H2O2. The enzyme catalyses (1R,10aS)-1,4,10,10a-tetrahydrophenazine-1-carboxylate + O2 = (10aS)-10,10a-dihydrophenazine-1-carboxylate + H2O2. The catalysed reaction is (1R)-1,4,5,10-tetrahydrophenazine-1-carboxylate + O2 = (10aS)-10,10a-dihydrophenazine-1-carboxylate + H2O2. The protein operates within antibiotic biosynthesis; phenazine biosynthesis. Involved in the biosynthesis of the antibiotic phenazine, a nitrogen-containing heterocyclic molecule having important roles in virulence, competition and biological control. Catalyzes several oxidations in the terminal steps of core phenazine biosynthesis. It oxidizes both hexahydrophenazine-1,6-dicarboxylic acid (HHPDC) and tetrahydrophenazine-1-carboxylic acid (THPCA) and thereby contributes to the generation of both phenazine-1,6-dicarboxylic acid (PDC) and phenazine-1-carboxylic acid (PCA). In Pseudomonas chlororaphis (Pseudomonas aureofaciens), this protein is Dihydrophenazinedicarboxylate synthase.